A 496-amino-acid polypeptide reads, in one-letter code: N-acetylmuramoyl-L-alanine amidase LytC (496 aa).

The signal sequence occupies residues 1-24; the sequence is MRSYIKVLTMCFLGLILFVPTALA. 3 consecutive repeat copies span residues 30-128, 129-222, and 223-318. The segment at 30–318 is 3 X tandem repeats; the sequence is RVGGSNRYGT…VANQLKNPVV (289 aa). One can recognise a MurNAc-LAA domain in the interval 322–490; that stretch reads IFIDPGHGDQ…DKAAQAIHDG (169 aa).

This sequence belongs to the N-acetylmuramoyl-L-alanine amidase 3 family.

It localises to the secreted. It is found in the cell wall. It carries out the reaction Hydrolyzes the link between N-acetylmuramoyl residues and L-amino acid residues in certain cell-wall glycopeptides.. In terms of biological role, autolysins are cell wall hydrolases involved in some important biological processes such as cell separation, cell-wall turnover, competence for genetic transformation, formation of the flagella - in particular of its basal body - and sporulation. Has a high affinity for teichoic acid-endowed peptidoglycan. LytC is required for efficient swarming motility but not at the level of cell separation or flagellum biosynthesis. Rather, LytC appears to be important for proper flagellar function. In Bacillus subtilis (strain 168), this protein is N-acetylmuramoyl-L-alanine amidase LytC (lytC).